We begin with the raw amino-acid sequence, 328 residues long: Malate dehydrogenase (328 aa).

12 to 18 (GAAGQIA) contacts NAD(+). Substrate is bound by residues Arg-93 and Arg-99. Residues Asn-106, Gln-113, and 130 to 132 (VGN) contribute to the NAD(+) site. Substrate-binding residues include Asn-132 and Arg-163. Residue His-188 is the Proton acceptor of the active site.

The protein belongs to the LDH/MDH superfamily. MDH type 2 family.

The catalysed reaction is (S)-malate + NAD(+) = oxaloacetate + NADH + H(+). Functionally, catalyzes the reversible oxidation of malate to oxaloacetate. The polypeptide is Malate dehydrogenase (Burkholderia cenocepacia (strain ATCC BAA-245 / DSM 16553 / LMG 16656 / NCTC 13227 / J2315 / CF5610) (Burkholderia cepacia (strain J2315))).